Here is a 109-residue protein sequence, read N- to C-terminus: Phosphoribosyl-AMP cyclohydrolase (109 aa).

Asp-80 is a Mg(2+) binding site. Cys-81 is a Zn(2+) binding site. The Mg(2+) site is built by Asp-82 and Asp-84. Zn(2+) contacts are provided by Cys-97 and Cys-104.

Belongs to the PRA-CH family. Homodimer. The cofactor is Mg(2+). It depends on Zn(2+) as a cofactor.

Its subcellular location is the cytoplasm. The catalysed reaction is 1-(5-phospho-beta-D-ribosyl)-5'-AMP + H2O = 1-(5-phospho-beta-D-ribosyl)-5-[(5-phospho-beta-D-ribosylamino)methylideneamino]imidazole-4-carboxamide. It functions in the pathway amino-acid biosynthesis; L-histidine biosynthesis; L-histidine from 5-phospho-alpha-D-ribose 1-diphosphate: step 3/9. Catalyzes the hydrolysis of the adenine ring of phosphoribosyl-AMP. The sequence is that of Phosphoribosyl-AMP cyclohydrolase from Clostridium beijerinckii (strain ATCC 51743 / NCIMB 8052) (Clostridium acetobutylicum).